A 122-amino-acid polypeptide reads, in one-letter code: MIQQESRLKVADNSGAREILVIKILGGSRVKTANIGDIIVATVKQATPGGVVKKGDVVKAVVVRTKYGTHRPDGSYIKFDENAAVIIGEDKSPKGTRIFGPVARELRDGNFMKIVSLAPEVL.

It belongs to the universal ribosomal protein uL14 family. Part of the 50S ribosomal subunit. Forms a cluster with proteins L3 and L19. In the 70S ribosome, L14 and L19 interact and together make contacts with the 16S rRNA in bridges B5 and B8.

In terms of biological role, binds to 23S rRNA. Forms part of two intersubunit bridges in the 70S ribosome. In Ligilactobacillus salivarius (strain UCC118) (Lactobacillus salivarius), this protein is Large ribosomal subunit protein uL14.